Consider the following 92-residue polypeptide: Em-like protein GEA6 (92 aa).

Composition is skewed to basic and acidic residues over residues 1–18 (MASQ…KKGE) and 37–51 (AEGR…KEQL). A disordered region spans residues 1 to 92 (MASQQEKKQL…IDESKFRTKT (92 aa)).

This sequence belongs to the small hydrophilic plant seed protein family. Present only in nearly dry and dry seeds.

Its function is as follows. It is thought to provide protection for the cytoplasm during the desiccation stage of embryo development. This is Em-like protein GEA6 (EM6) from Arabidopsis thaliana (Mouse-ear cress).